Reading from the N-terminus, the 350-residue chain is Holliday junction branch migration complex subunit RuvB (350 aa).

The segment at 1 to 186 (MAGHEEEDER…FGIPLRLDFY (186 aa)) is large ATPase domain (RuvB-L). Residues leucine 25, arginine 26, glycine 67, lysine 70, threonine 71, threonine 72, 133–135 (EDF), arginine 176, tyrosine 186, and arginine 223 each bind ATP. Threonine 71 provides a ligand contact to Mg(2+). A small ATPAse domain (RuvB-S) region spans residues 187–257 (ETDELVQIVT…IADAALNRLE (71 aa)). Residues 260–350 (GRGLDAMDRR…VQPDLWSDAP (91 aa)) form a head domain (RuvB-H) region. DNA contacts are provided by arginine 296, arginine 315, and arginine 320.

This sequence belongs to the RuvB family. As to quaternary structure, homohexamer. Forms an RuvA(8)-RuvB(12)-Holliday junction (HJ) complex. HJ DNA is sandwiched between 2 RuvA tetramers; dsDNA enters through RuvA and exits via RuvB. An RuvB hexamer assembles on each DNA strand where it exits the tetramer. Each RuvB hexamer is contacted by two RuvA subunits (via domain III) on 2 adjacent RuvB subunits; this complex drives branch migration. In the full resolvosome a probable DNA-RuvA(4)-RuvB(12)-RuvC(2) complex forms which resolves the HJ.

It is found in the cytoplasm. It catalyses the reaction ATP + H2O = ADP + phosphate + H(+). The RuvA-RuvB-RuvC complex processes Holliday junction (HJ) DNA during genetic recombination and DNA repair, while the RuvA-RuvB complex plays an important role in the rescue of blocked DNA replication forks via replication fork reversal (RFR). RuvA specifically binds to HJ cruciform DNA, conferring on it an open structure. The RuvB hexamer acts as an ATP-dependent pump, pulling dsDNA into and through the RuvAB complex. RuvB forms 2 homohexamers on either side of HJ DNA bound by 1 or 2 RuvA tetramers; 4 subunits per hexamer contact DNA at a time. Coordinated motions by a converter formed by DNA-disengaged RuvB subunits stimulates ATP hydrolysis and nucleotide exchange. Immobilization of the converter enables RuvB to convert the ATP-contained energy into a lever motion, pulling 2 nucleotides of DNA out of the RuvA tetramer per ATP hydrolyzed, thus driving DNA branch migration. The RuvB motors rotate together with the DNA substrate, which together with the progressing nucleotide cycle form the mechanistic basis for DNA recombination by continuous HJ branch migration. Branch migration allows RuvC to scan DNA until it finds its consensus sequence, where it cleaves and resolves cruciform DNA. In Rhodospirillum rubrum (strain ATCC 11170 / ATH 1.1.1 / DSM 467 / LMG 4362 / NCIMB 8255 / S1), this protein is Holliday junction branch migration complex subunit RuvB.